The chain runs to 119 residues: MARVKRGVTSHAKHKKTLEAAKGFYGRRKNTIRAAKAAVDRSMQYATRDRRAKKRVFRALWIQRLNAAVRECGLTYSRFIDGLAKAGVAVDRKVLSDLAITQPEAFKAIVDKAKSALPA.

This sequence belongs to the bacterial ribosomal protein bL20 family.

Functionally, binds directly to 23S ribosomal RNA and is necessary for the in vitro assembly process of the 50S ribosomal subunit. It is not involved in the protein synthesizing functions of that subunit. The sequence is that of Large ribosomal subunit protein bL20 from Methylocella silvestris (strain DSM 15510 / CIP 108128 / LMG 27833 / NCIMB 13906 / BL2).